The chain runs to 924 residues: Isoleucine--tRNA ligase (924 aa).

Residues 57-67 carry the 'HIGH' region motif; it reads PYANGDIHMGH. Glu-552 serves as a coordination point for L-isoleucyl-5'-AMP. Positions 593 to 597 match the 'KMSKS' region motif; that stretch reads KMSKS. Residue Lys-596 coordinates ATP. Zn(2+) contacts are provided by Cys-891, Cys-894, Cys-911, and Cys-914.

Belongs to the class-I aminoacyl-tRNA synthetase family. IleS type 1 subfamily. As to quaternary structure, monomer. Zn(2+) is required as a cofactor.

Its subcellular location is the cytoplasm. It carries out the reaction tRNA(Ile) + L-isoleucine + ATP = L-isoleucyl-tRNA(Ile) + AMP + diphosphate. Functionally, catalyzes the attachment of isoleucine to tRNA(Ile). As IleRS can inadvertently accommodate and process structurally similar amino acids such as valine, to avoid such errors it has two additional distinct tRNA(Ile)-dependent editing activities. One activity is designated as 'pretransfer' editing and involves the hydrolysis of activated Val-AMP. The other activity is designated 'posttransfer' editing and involves deacylation of mischarged Val-tRNA(Ile). In Geobacillus thermodenitrificans (strain NG80-2), this protein is Isoleucine--tRNA ligase.